A 216-amino-acid polypeptide reads, in one-letter code: Somatotropin (216 aa).

Positions 1 to 26 (MAASPRNSVLLAFALLCLPWPQEVGA) are cleaved as a signal peptide. Residue His45 participates in Zn(2+) binding. A disulfide bond links Cys78 and Cys189. Residue Ser131 is modified to Phosphoserine. A Zn(2+)-binding site is contributed by Glu198. A disulfide bridge connects residues Cys206 and Cys214.

The protein belongs to the somatotropin/prolactin family.

The protein resides in the secreted. Plays an important role in growth control. Its major role in stimulating body growth is to stimulate the liver and other tissues to secrete IGF1. It stimulates both the differentiation and proliferation of myoblasts. It also stimulates amino acid uptake and protein synthesis in muscle and other tissues. This is Somatotropin (GH1) from Canis lupus familiaris (Dog).